We begin with the raw amino-acid sequence, 334 residues long: Adenosine deaminase (334 aa).

The Zn(2+) site is built by H12 and H14. Residues H14, D16, and G170 each coordinate substrate. Residue H197 participates in Zn(2+) binding. The active-site Proton donor is the E200. D278 lines the Zn(2+) pocket. Substrate is bound at residue D279.

It belongs to the metallo-dependent hydrolases superfamily. Adenosine and AMP deaminases family. Adenosine deaminase subfamily. The cofactor is Zn(2+).

The catalysed reaction is adenosine + H2O + H(+) = inosine + NH4(+). It carries out the reaction 2'-deoxyadenosine + H2O + H(+) = 2'-deoxyinosine + NH4(+). In terms of biological role, catalyzes the hydrolytic deamination of adenosine and 2-deoxyadenosine. In Vibrio cholerae serotype O1 (strain ATCC 39541 / Classical Ogawa 395 / O395), this protein is Adenosine deaminase.